Reading from the N-terminus, the 417-residue chain is Serine hydroxymethyltransferase (417 aa).

(6S)-5,6,7,8-tetrahydrofolate contacts are provided by residues leucine 121 and 125-127 (GHL). Lysine 229 bears the N6-(pyridoxal phosphate)lysine mark. A (6S)-5,6,7,8-tetrahydrofolate-binding site is contributed by 355–357 (SPF).

It belongs to the SHMT family. Homodimer. The cofactor is pyridoxal 5'-phosphate.

The protein resides in the cytoplasm. It carries out the reaction (6R)-5,10-methylene-5,6,7,8-tetrahydrofolate + glycine + H2O = (6S)-5,6,7,8-tetrahydrofolate + L-serine. It participates in one-carbon metabolism; tetrahydrofolate interconversion. Its pathway is amino-acid biosynthesis; glycine biosynthesis; glycine from L-serine: step 1/1. Its function is as follows. Catalyzes the reversible interconversion of serine and glycine with tetrahydrofolate (THF) serving as the one-carbon carrier. This reaction serves as the major source of one-carbon groups required for the biosynthesis of purines, thymidylate, methionine, and other important biomolecules. Also exhibits THF-independent aldolase activity toward beta-hydroxyamino acids, producing glycine and aldehydes, via a retro-aldol mechanism. This Xylella fastidiosa (strain M23) protein is Serine hydroxymethyltransferase.